The sequence spans 313 residues: L-lactate dehydrogenase (313 aa).

Residues Val-11, Asp-32, Arg-37, Tyr-62, and 76 to 77 (GV) contribute to the NAD(+) site. Substrate-binding positions include Gln-79, Arg-85, and 117-120 (NPVD). NAD(+)-binding positions include 115–117 (ASN) and Ser-143. 148–151 (DTAR) provides a ligand contact to substrate. 2 residues coordinate beta-D-fructose 1,6-bisphosphate: Arg-153 and His-168. Residue His-175 is the Proton acceptor of the active site. Tyr-221 carries the post-translational modification Phosphotyrosine. Substrate is bound at residue Thr-230.

The protein belongs to the LDH/MDH superfamily. LDH family. Homotetramer.

It localises to the cytoplasm. The enzyme catalyses (S)-lactate + NAD(+) = pyruvate + NADH + H(+). Its pathway is fermentation; pyruvate fermentation to lactate; (S)-lactate from pyruvate: step 1/1. Its activity is regulated as follows. Allosterically activated by fructose 1,6-bisphosphate (FBP). Its function is as follows. Catalyzes the conversion of lactate to pyruvate. This chain is L-lactate dehydrogenase, found in Geotalea daltonii (strain DSM 22248 / JCM 15807 / FRC-32) (Geobacter daltonii).